The following is a 400-amino-acid chain: Argininosuccinate synthase (400 aa).

8–16 (AYSGGLDTS) serves as a coordination point for ATP. Tyr-87 lines the L-citrulline pocket. Gly-117 contacts ATP. Positions 119, 123, and 124 each coordinate L-aspartate. Asn-123 contributes to the L-citrulline binding site. 4 residues coordinate L-citrulline: Arg-127, Ser-175, Glu-260, and Tyr-272.

This sequence belongs to the argininosuccinate synthase family. Type 1 subfamily. In terms of assembly, homotetramer.

The protein resides in the cytoplasm. The enzyme catalyses L-citrulline + L-aspartate + ATP = 2-(N(omega)-L-arginino)succinate + AMP + diphosphate + H(+). Its pathway is amino-acid biosynthesis; L-arginine biosynthesis; L-arginine from L-ornithine and carbamoyl phosphate: step 2/3. The polypeptide is Argininosuccinate synthase (Nocardia farcinica (strain IFM 10152)).